A 179-amino-acid chain; its full sequence is Cytochrome c-type biogenesis protein CcmE (179 aa).

Over 1–8 the chain is Cytoplasmic; that stretch reads MTPRRKSR. The helical; Signal-anchor for type II membrane protein transmembrane segment at 9 to 29 threads the bilayer; sequence MTVILFVLLGISIASALVLYA. Topologically, residues 30–179 are periplasmic; sequence LRQNIDLFYT…QKTSMQEGQK (150 aa). Heme is bound by residues H131 and Y135. Positions 151 to 179 are disordered; sequence MGVADLKGESERDRQEKAYQKTSMQEGQK. A compositionally biased stretch (basic and acidic residues) spans 156-169; it reads LKGESERDRQEKAY. Residues 170–179 are compositionally biased toward polar residues; it reads QKTSMQEGQK.

Belongs to the CcmE/CycJ family.

It localises to the cell inner membrane. Its function is as follows. Heme chaperone required for the biogenesis of c-type cytochromes. Transiently binds heme delivered by CcmC and transfers the heme to apo-cytochromes in a process facilitated by CcmF and CcmH. This is Cytochrome c-type biogenesis protein CcmE from Pasteurella multocida (strain Pm70).